We begin with the raw amino-acid sequence, 351 residues long: Anthranilate phosphoribosyltransferase (351 aa).

5-phospho-alpha-D-ribose 1-diphosphate-binding positions include G80, G83–D84, T88, N90–T93, K108–S116, and S120. Anthranilate is bound at residue G80. A Mg(2+)-binding site is contributed by S92. Anthranilate is bound at residue N111. An anthranilate-binding site is contributed by R166. Mg(2+) is bound by residues D229 and E230.

The protein belongs to the anthranilate phosphoribosyltransferase family. In terms of assembly, homodimer. Requires Mg(2+) as cofactor.

The enzyme catalyses N-(5-phospho-beta-D-ribosyl)anthranilate + diphosphate = 5-phospho-alpha-D-ribose 1-diphosphate + anthranilate. It participates in amino-acid biosynthesis; L-tryptophan biosynthesis; L-tryptophan from chorismate: step 2/5. In terms of biological role, catalyzes the transfer of the phosphoribosyl group of 5-phosphorylribose-1-pyrophosphate (PRPP) to anthranilate to yield N-(5'-phosphoribosyl)-anthranilate (PRA). The protein is Anthranilate phosphoribosyltransferase of Chlorobaculum tepidum (strain ATCC 49652 / DSM 12025 / NBRC 103806 / TLS) (Chlorobium tepidum).